Here is a 394-residue protein sequence, read N- to C-terminus: MSKEKFNRSKPHINVGTIGHVDHGKTTLTSAITTVLSKRFGGKACAFEQIDNAPEEKARGITINTSHVEYDTELRHYAHVDCPGHADYIKNMITGAAQMDGAILVVAATDGPMPQTREHILLGRQVGVPHIIVFLNKCDMVDDEELLELVEMEVRDLLTQYDFPGDNIPIIRGSALKALEGEKIWEDKIIELANSLDKYIPIPVRAVDEPFLLPIEDVFSISGRGTVVTGRIERGILKVGEEVEIVGIKSTTKTICTGVEMFRKLLDEGRAGENVGILLRGTKREDIERGQVLAKPGTINPHVKFESEVYVLSKEEGGRHTPFFKGYRPQFYFRTTDVTGSIELPENIEMVMPGDNINMVVTLIHPIAMAEGLRFAIREGGRTVGAGVVTKVIA.

Residues 10 to 204 form the tr-type G domain; that stretch reads KPHINVGTIG…SLDKYIPIPV (195 aa). Residues 19-26 form a G1 region; that stretch reads GHVDHGKT. 19–26 lines the GTP pocket; the sequence is GHVDHGKT. A Mg(2+)-binding site is contributed by Thr-26. The G2 stretch occupies residues 60-64; the sequence is GITIN. Residues 81–84 form a G3 region; it reads DCPG. GTP-binding positions include 81–85 and 136–139; these read DCPGH and NKCD. The interval 136–139 is G4; that stretch reads NKCD. Residues 174–176 form a G5 region; sequence SAL.

It belongs to the TRAFAC class translation factor GTPase superfamily. Classic translation factor GTPase family. EF-Tu/EF-1A subfamily. As to quaternary structure, monomer.

It localises to the cytoplasm. It carries out the reaction GTP + H2O = GDP + phosphate + H(+). Functionally, GTP hydrolase that promotes the GTP-dependent binding of aminoacyl-tRNA to the A-site of ribosomes during protein biosynthesis. The sequence is that of Elongation factor Tu from Buchnera aphidicola subsp. Cinara cedri (strain Cc).